The chain runs to 1958 residues: Probable Rho GTPase-activating protein CG5521 (1958 aa).

Disordered regions lie at residues 1–21, 400–424, and 635–804; these read MFTK…QDSK, PPFL…RSQR, and GSVW…GIEG. Positions 400–414 are enriched in pro residues; that stretch reads PPFLLEPNDDPPPPS. Low complexity predominate over residues 640-656; sequence GSGSNSAANGGSAASAA. Residues serine 718, serine 764, and serine 767 each carry the phosphoserine modification. The segment covering 758-774 has biased composition (basic and acidic residues); sequence DLRRAMSLDSLARKGDA. The span at 775–785 shows a compositional bias: acidic residues; the sequence is EETDSYQEGDN. Phosphoserine occurs at positions 787, 791, 793, and 795. The span at 788–800 shows a compositional bias: polar residues; the sequence is GAGSRSPSPTASS. Position 980 is a phosphotyrosine (tyrosine 980). Residues 1534–1568 form a disordered region; it reads HSTQAPSPALRHASSNSSLQQPDQRSLHSTTASFD. Polar residues predominate over residues 1546–1568; that stretch reads ASSNSSLQQPDQRSLHSTTASFD. Serine 1551 carries the phosphoserine modification. The Rap-GAP domain occupies 1612-1819; it reads LRNVDLQKCR…EERNRSLDSV (208 aa). Positions 1903-1958 are disordered; it reads ATGMSSASPRGPRKLGAPFKSVTKKHSLQHIAVGGGAGAGGDTPPESPTLPQRRFK. Threonine 1945 bears the Phosphothreonine mark. Serine 1949 bears the Phosphoserine mark.

In Drosophila melanogaster (Fruit fly), this protein is Probable Rho GTPase-activating protein CG5521.